Consider the following 187-residue polypeptide: Elongation factor P (187 aa).

This sequence belongs to the elongation factor P family.

It is found in the cytoplasm. Its pathway is protein biosynthesis; polypeptide chain elongation. In terms of biological role, involved in peptide bond synthesis. Stimulates efficient translation and peptide-bond synthesis on native or reconstituted 70S ribosomes in vitro. Probably functions indirectly by altering the affinity of the ribosome for aminoacyl-tRNA, thus increasing their reactivity as acceptors for peptidyl transferase. The chain is Elongation factor P from Mycobacterium marinum (strain ATCC BAA-535 / M).